Consider the following 129-residue polypeptide: Small ribosomal subunit protein uS11 (129 aa).

Belongs to the universal ribosomal protein uS11 family. Part of the 30S ribosomal subunit. Interacts with proteins S7 and S18. Binds to IF-3.

Functionally, located on the platform of the 30S subunit, it bridges several disparate RNA helices of the 16S rRNA. Forms part of the Shine-Dalgarno cleft in the 70S ribosome. The protein is Small ribosomal subunit protein uS11 of Limosilactobacillus reuteri (strain DSM 20016) (Lactobacillus reuteri).